A 198-amino-acid polypeptide reads, in one-letter code: CASP-like protein 2B1 (198 aa).

Residues 1 to 12 are Cytoplasmic-facing; it reads MAAAMGLERKAK. Residues 13–33 traverse the membrane as a helical segment; the sequence is VAEVALRCAVCALAALAAALV. Over 34–55 the chain is Extracellular; sequence GTGSQTRTFFSLEKKARFTDMK. Residues 56-76 traverse the membrane as a helical segment; that stretch reads ALVLLVAAHGAAAVYSLLQLA. Residues 77–91 lie on the Cytoplasmic side of the membrane; it reads RCAAAAAWKGGSNGG. A helical membrane pass occupies residues 92–112; the sequence is AAVVAWSVFSCDQAVAYALMA. The Extracellular portion of the chain corresponds to 113–149; sequence ATAAALQSSVVGKRGQPELQWMPVCGLYGAFCRRVGE. A helical transmembrane segment spans residues 150-170; that stretch reads GLAAAVAAGLAAVLLAAVSAF. Over 171-198 the chain is Cytoplasmic; the sequence is NLFRLYGGGGGGRKSSAGAVSGNGANTW.

Belongs to the Casparian strip membrane proteins (CASP) family. As to quaternary structure, homodimer and heterodimers.

Its subcellular location is the cell membrane. The polypeptide is CASP-like protein 2B1 (Oryza sativa subsp. japonica (Rice)).